A 182-amino-acid chain; its full sequence is Transcription termination/antitermination protein NusG (182 aa).

Residues 131 to 161 (GEVVRVNEGPFADFNGTVEEVDYEKSRLKVS) form the KOW domain.

The protein belongs to the NusG family.

In terms of biological role, participates in transcription elongation, termination and antitermination. This chain is Transcription termination/antitermination protein NusG, found in Vibrio parahaemolyticus serotype O3:K6 (strain RIMD 2210633).